Here is a 65-residue protein sequence, read N- to C-terminus: Metallothionein-3 (65 aa).

Met1 bears the N-acetylmethionine mark. The tract at residues 1-30 is beta; it reads MDPEACPCPTGGSCTCSDSCKCEGCTCASS. A divalent metal cation-binding residues include Cys6, Cys8, Cys14, Cys16, Cys20, Cys22, Cys25, and Cys27. The segment at 31–65 is alpha; sequence KKSCCPAECEKCAKDCVCKGGEGAEAEEKKCGCCQ. Residue Ser33 is modified to Phosphoserine. Residues Cys34, Cys35, Cys39, Cys42, Cys46, Cys48, Cys61, Cys63, and Cys64 each contribute to the a divalent metal cation site.

The protein belongs to the metallothionein superfamily. Type 1 family.

Functionally, binds heavy metals. Contains five zinc and one copper atoms per polypeptide chain and only a negligible amount of cadmium. This is Metallothionein-3 (MT3) from Ovis aries (Sheep).